The chain runs to 189 residues: Inner membrane-spanning protein YciB (189 aa).

5 consecutive transmembrane segments (helical) span residues 23–43 (ILLATLVLIPATLAQVAFVWW), 54–74 (ITLALVVVMGGATVIFHDAAF), 82–102 (VNWLFAFAFLVAPLFGGKTLI), 120–140 (LNLAWVAFFIALGAINVYVFK), and 150–170 (FKLFGMLGLTLLFVLGQGVYL).

This sequence belongs to the YciB family.

Its subcellular location is the cell inner membrane. Plays a role in cell envelope biogenesis, maintenance of cell envelope integrity and membrane homeostasis. This is Inner membrane-spanning protein YciB from Chromohalobacter salexigens (strain ATCC BAA-138 / DSM 3043 / CIP 106854 / NCIMB 13768 / 1H11).